We begin with the raw amino-acid sequence, 137 residues long: Small ribosomal subunit protein uS12 (137 aa).

At Asp-89 the chain carries 3-methylthioaspartic acid. Positions 104–137 (TAGVNGRKQSRSKYGAKRPKPGQAAAAPAKGKKK) are disordered. A compositionally biased stretch (basic residues) spans 111–123 (KQSRSKYGAKRPK). Over residues 124–137 (PGQAAAAPAKGKKK) the composition is skewed to low complexity.

Belongs to the universal ribosomal protein uS12 family. In terms of assembly, part of the 30S ribosomal subunit. Contacts proteins S8 and S17. May interact with IF1 in the 30S initiation complex.

In terms of biological role, with S4 and S5 plays an important role in translational accuracy. Interacts with and stabilizes bases of the 16S rRNA that are involved in tRNA selection in the A site and with the mRNA backbone. Located at the interface of the 30S and 50S subunits, it traverses the body of the 30S subunit contacting proteins on the other side and probably holding the rRNA structure together. The combined cluster of proteins S8, S12 and S17 appears to hold together the shoulder and platform of the 30S subunit. The chain is Small ribosomal subunit protein uS12 from Cytophaga hutchinsonii (strain ATCC 33406 / DSM 1761 / CIP 103989 / NBRC 15051 / NCIMB 9469 / D465).